The sequence spans 140 residues: MTSPLLESRRQLRKCAFQALMSLEFGTNVETACRFAYTHDREDTDVQLPAFLIDLVSGVQAKKEELDKQITQHLKVGWTIERLTLVERNLLRLGVFEITSFDTPQLVAVNEAIELAKDFSDQKSARFINGLLSQFVTEEQ.

This sequence belongs to the NusB family.

Functionally, involved in transcription antitermination. Required for transcription of ribosomal RNA (rRNA) genes. Binds specifically to the boxA antiterminator sequence of the ribosomal RNA (rrn) operons. This is Transcription antitermination protein NusB from Streptococcus pneumoniae (strain 70585).